Consider the following 161-residue polypeptide: Nucleotide-binding protein Pfl01_4421 (161 aa).

It belongs to the YajQ family.

In terms of biological role, nucleotide-binding protein. The sequence is that of Nucleotide-binding protein Pfl01_4421 from Pseudomonas fluorescens (strain Pf0-1).